The primary structure comprises 539 residues: CTP synthase (539 aa).

Residues 1–267 are amidoligase domain; it reads MTKYIFVTGG…DQKVCDFLHI (267 aa). A CTP-binding site is contributed by S13. S13 provides a ligand contact to UTP. Position 14-19 (14-19) interacts with ATP; that stretch reads SLGKGI. Y54 contacts L-glutamine. D71 is an ATP binding site. 2 residues coordinate Mg(2+): D71 and E141. CTP contacts are provided by residues 148–150, 188–193, and K224; these read DME and KTKPTQ. UTP contacts are provided by residues 188-193 and K224; that span reads KTKPTQ. Residues 294-537 enclose the Glutamine amidotransferase type-1 domain; sequence KITLVGKYVE…IGAASGLPEQ (244 aa). Position 356 (G356) interacts with L-glutamine. Catalysis depends on C383, which acts as the Nucleophile; for glutamine hydrolysis. Residues 384 to 387, E407, and R465 contribute to the L-glutamine site; that span reads LGMQ. Active-site residues include H510 and E512.

It belongs to the CTP synthase family. Homotetramer.

It catalyses the reaction UTP + L-glutamine + ATP + H2O = CTP + L-glutamate + ADP + phosphate + 2 H(+). The enzyme catalyses L-glutamine + H2O = L-glutamate + NH4(+). The catalysed reaction is UTP + NH4(+) + ATP = CTP + ADP + phosphate + 2 H(+). The protein operates within pyrimidine metabolism; CTP biosynthesis via de novo pathway; CTP from UDP: step 2/2. Allosterically activated by GTP, when glutamine is the substrate; GTP has no effect on the reaction when ammonia is the substrate. The allosteric effector GTP functions by stabilizing the protein conformation that binds the tetrahedral intermediate(s) formed during glutamine hydrolysis. Inhibited by the product CTP, via allosteric rather than competitive inhibition. Functionally, catalyzes the ATP-dependent amination of UTP to CTP with either L-glutamine or ammonia as the source of nitrogen. Regulates intracellular CTP levels through interactions with the four ribonucleotide triphosphates. This Lactobacillus helveticus (strain DPC 4571) protein is CTP synthase.